A 250-amino-acid chain; its full sequence is MAVTMRQMLEAGVHFGHQTRFWNPKMAPFIFGHRNKIHIINLEKTLPMYNDALKYARQLAANRGTILFVGTKRQSRDTIAEEAQRAGMPFVNARWLGGMLTNFKTLKVSIKRLKDMEAALEAGETERMSKKEALLFEREMAKLVKSIGGVKDMGGIPDAIFVVDVGYHKIAVTEANKLGIPVIAVVDTNHSPEGIDYVIPGNDDASKAVALYTAGVADAIVEGRANAVNEVVQAARGGDGDEFVEVNSEA.

This sequence belongs to the universal ribosomal protein uS2 family.

The protein is Small ribosomal subunit protein uS2 of Paraburkholderia phytofirmans (strain DSM 17436 / LMG 22146 / PsJN) (Burkholderia phytofirmans).